A 207-amino-acid polypeptide reads, in one-letter code: Ras-related protein Rab-7a (207 aa).

An N-acetylthreonine modification is found at threonine 2. Serine 17, glycine 18, valine 19, glycine 20, lysine 21, threonine 22, serine 23, serine 34, asparagine 35, tyrosine 37, and threonine 40 together coordinate GTP. Threonine 22 contributes to the Mg(2+) binding site. A Switch 1 motif is present at residues 28–41 (YVNKKFSNQYKATI). Mg(2+) is bound by residues threonine 40 and aspartate 63. Glycine 66 lines the GTP pocket. A Switch 2 motif is present at residues 67 to 82 (QERFQSLGVAFYRGAD). Serine 72 carries the post-translational modification Phosphoserine. Asparagine 125, lysine 126, aspartate 128, alanine 156, and lysine 157 together coordinate GTP. Glycyl lysine isopeptide (Lys-Gly) (interchain with G-Cter in ubiquitin) cross-links involve residues lysine 191 and lysine 194. 2 S-geranylgeranyl cysteine lipidation sites follow: cysteine 205 and cysteine 207. Cysteine 207 bears the Cysteine methyl ester mark.

Belongs to the small GTPase superfamily. Rab family. As to quaternary structure, interacts with NTRK1/TRKA. Interacts with RILP. Interacts with PSMA7. Interacts with RNF115. Interacts with and FYCO1. Interacts with the PIK3C3/VPS34-PIK3R4 complex. The GTP-bound form interacts with OSBPL1A. The GTP-bound form interacts with RAC1. Interacts with CLN3. Interacts with CHM, the substrate-binding subunit of the Rab geranylgeranyltransferase complex. Interacts with C9orf72. Does not interact with HPS4 and the BLOC-3 complex (heterodimer of HPS1 and HPS4). Interacts with CLN5. Interacts with PLEKHM1 (via N- and C-terminus). Interacts with PRPH; the interaction is direct. Interacts with VPS13A. The GDP-bound form interacts with RIMOC1. Interacts with the MON1A-CCZ1B complex and this interaction is enhanced in the presence of RIMOC1. Interacts with VPS39 and VPS41. Forms a ternary complex with LAMP2 and RUFY4; the interaction with LAMP2 is mediated by RUFY4 (via RUN and coiled coil domains). Mg(2+) is required as a cofactor. Post-translationally, deubiquitination at Lys-191 and Lys-194 by USP32. Phosphorylated at Ser-72 by LRRK1; phosphorylation is dependent on protein kinase C (PKC) activation of LRRK1. In terms of processing, prenylated. Prenylation is required for association with cellular membranes. As to expression, expressed in osteoclasts and in neurons.

It is found in the cytoplasmic vesicle. The protein localises to the phagosome membrane. It localises to the late endosome membrane. Its subcellular location is the lysosome membrane. The protein resides in the melanosome membrane. It is found in the autophagosome membrane. The protein localises to the lipid droplet. It localises to the endosome membrane. Its subcellular location is the mitochondrion membrane. The enzyme catalyses GTP + H2O = GDP + phosphate + H(+). Its activity is regulated as follows. Regulated by guanine nucleotide exchange factors (GEFs) which promote the exchange of bound GDP for free GTP. Regulated by GTPase activating proteins (GAPs) which increase the GTP hydrolysis activity. Inhibited by GDP dissociation inhibitors (GDIs). Its function is as follows. The small GTPases Rab are key regulators of intracellular membrane trafficking, from the formation of transport vesicles to their fusion with membranes. Rabs cycle between an inactive GDP-bound form and an active GTP-bound form that is able to recruit to membranes different sets of downstream effectors directly responsible for vesicle formation, movement, tethering and fusion. In its active state, RAB7A binds to a variety of effector proteins playing a key role in the regulation of endo-lysosomal trafficking. Governs early-to-late endosomal maturation, microtubule minus-end as well as plus-end directed endosomal migration and positioning, and endosome-lysosome transport through different protein-protein interaction cascades. Also plays a central role in growth-factor-mediated cell signaling, nutrient-transporter-mediated nutrient uptake, neurotrophin transport in the axons of neurons and lipid metabolism. Also involved in regulation of some specialized endosomal membrane trafficking, such as maturation of melanosomes, pathogen-induced phagosomes (or vacuoles) and autophagosomes. Plays a role in the maturation and acidification of phagosomes that engulf pathogens, such as S.aureus and Mycobacteria. Plays a role in the fusion of phagosomes with lysosomes. In concert with RAC1, plays a role in regulating the formation of RBs (ruffled borders) in osteoclasts. Controls the endosomal trafficking and neurite outgrowth signaling of NTRK1/TRKA. Regulates the endocytic trafficking of the EGF-EGFR complex by regulating its lysosomal degradation. Involved in the ADRB2-stimulated lipolysis through lipophagy, a cytosolic lipase-independent autophagic pathway. Required for the exosomal release of SDCBP, CD63 and syndecan. Required for vesicular trafficking and cell surface expression of ACE2. May play a role in PRPH neuronal intermediate filament assembly. This is Ras-related protein Rab-7a from Rattus norvegicus (Rat).